The sequence spans 121 residues: Flagellar protein FliT (121 aa).

Positions 1-50 are required for homodimerization; it reads MNNAPHLYFAWQQLVEKSQLMLRLATEEQWDELIASEMAYVNAVQEIAHL. A fliD binding region spans residues 60 to 98; it reads MQEQLRPMLHLILDNESKVKQLLQIRMDELAKLVGQSSV.

Belongs to the FliT family. Homodimer. Interacts with FliD and FlhC.

Its subcellular location is the cytoplasm. The protein resides in the cytosol. Its function is as follows. Dual-function protein that regulates the transcription of class 2 flagellar operons and that also acts as an export chaperone for the filament-capping protein FliD. As a transcriptional regulator, acts as an anti-FlhDC factor; it directly binds FlhC, thus inhibiting the binding of the FlhC/FlhD complex to class 2 promoters, resulting in decreased expression of class 2 flagellar operons. As a chaperone, effects FliD transition to the membrane by preventing its premature polymerization, and by directing it to the export apparatus. In Escherichia coli O17:K52:H18 (strain UMN026 / ExPEC), this protein is Flagellar protein FliT.